The sequence spans 475 residues: Aspartyl/glutamyl-tRNA(Asn/Gln) amidotransferase subunit B (475 aa).

This sequence belongs to the GatB/GatE family. GatB subfamily. Heterotrimer of A, B and C subunits.

It catalyses the reaction L-glutamyl-tRNA(Gln) + L-glutamine + ATP + H2O = L-glutaminyl-tRNA(Gln) + L-glutamate + ADP + phosphate + H(+). It carries out the reaction L-aspartyl-tRNA(Asn) + L-glutamine + ATP + H2O = L-asparaginyl-tRNA(Asn) + L-glutamate + ADP + phosphate + 2 H(+). Its function is as follows. Allows the formation of correctly charged Asn-tRNA(Asn) or Gln-tRNA(Gln) through the transamidation of misacylated Asp-tRNA(Asn) or Glu-tRNA(Gln) in organisms which lack either or both of asparaginyl-tRNA or glutaminyl-tRNA synthetases. The reaction takes place in the presence of glutamine and ATP through an activated phospho-Asp-tRNA(Asn) or phospho-Glu-tRNA(Gln). In Helicobacter pylori (strain HPAG1), this protein is Aspartyl/glutamyl-tRNA(Asn/Gln) amidotransferase subunit B.